Here is a 264-residue protein sequence, read N- to C-terminus: Thiazole synthase (264 aa).

The active-site Schiff-base intermediate with DXP is K106. Residues G167, 193–194 (AG), and 215–216 (NT) contribute to the 1-deoxy-D-xylulose 5-phosphate site.

It belongs to the ThiG family. Homotetramer. Forms heterodimers with either ThiH or ThiS.

It localises to the cytoplasm. The catalysed reaction is [ThiS sulfur-carrier protein]-C-terminal-Gly-aminoethanethioate + 2-iminoacetate + 1-deoxy-D-xylulose 5-phosphate = [ThiS sulfur-carrier protein]-C-terminal Gly-Gly + 2-[(2R,5Z)-2-carboxy-4-methylthiazol-5(2H)-ylidene]ethyl phosphate + 2 H2O + H(+). Its pathway is cofactor biosynthesis; thiamine diphosphate biosynthesis. Functionally, catalyzes the rearrangement of 1-deoxy-D-xylulose 5-phosphate (DXP) to produce the thiazole phosphate moiety of thiamine. Sulfur is provided by the thiocarboxylate moiety of the carrier protein ThiS. In vitro, sulfur can be provided by H(2)S. This is Thiazole synthase from Stenotrophomonas maltophilia (strain R551-3).